A 221-amino-acid polypeptide reads, in one-letter code: Woronin body major protein (221 aa).

The Microbody targeting signal signature appears at 219–221 (SRL).

The protein belongs to the eIF-5A family. Hex1 subfamily. In terms of assembly, forms oligomers. Self-assembles into hexagonal rods.

It is found in the cell septum. Functionally, major component of Woronin bodies, fungal-specific organelles that occlude septal pores in order to separate intact from damaged compartments. Hex1 binds directly or indirectly to the Woronin body tether that in turn is anchored at the rim of the septal pore. In Emericella nidulans (strain FGSC A4 / ATCC 38163 / CBS 112.46 / NRRL 194 / M139) (Aspergillus nidulans), this protein is Woronin body major protein.